The chain runs to 395 residues: Nucleoside diphosphate kinase homolog 7 (395 aa).

The DM10 domain occupies 22–110; sequence QSERFAFIAE…YTARQLGSRK (89 aa).

The protein belongs to the NDK family. Component of sperm flagellar doublet microtubules. Component of the gamma-tubulin ring complex. Widely expressed. Expressed in the flagellum of epididymal sperm but not in testicular sperm (at protein level).

The protein localises to the cytoplasm. It localises to the cytoskeleton. Its subcellular location is the microtubule organizing center. The protein resides in the centrosome. It is found in the nucleus. The protein localises to the spindle. It localises to the cilium axoneme. Its subcellular location is the flagellum axoneme. The protein resides in the cell projection. It is found in the cilium. Its function is as follows. Possesses an intrinsic kinase activity. Displays 3'-5' exonuclease activity with a preference for single-stranded DNA. Does not seem to have nucleoside diphosphate kinase activity. Functional component of the gamma-tubulin ring complex, implicated in the regulation of the microtubule-nucleating activity of the gamma-tubulin ring complex in centrosomes, in a kinase activity-dependent manner. Part of the dynein-decorated doublet microtubules (DMTs) in cilia axoneme, which is required for motile cilia beating. The chain is Nucleoside diphosphate kinase homolog 7 (Nme7) from Rattus norvegicus (Rat).